The sequence spans 495 residues: Cytochrome P450 monooxygenase 64 (495 aa).

A helical membrane pass occupies residues 2 to 22 (FLQIVTSVLATGLLYALISVL). N-linked (GlcNAc...) asparagine glycosylation is found at Asn25 and Asn198. Cys428 contacts heme.

The protein belongs to the cytochrome P450 family. It depends on heme as a cofactor.

The protein resides in the membrane. It functions in the pathway secondary metabolite biosynthesis. Functionally, cytochrome P450 monooxygenase that is able to use 4-ethoxybenzoic acid as a substrate for oxidation. This chain is Cytochrome P450 monooxygenase 64, found in Postia placenta (strain ATCC 44394 / Madison 698-R) (Brown rot fungus).